The sequence spans 339 residues: MRLIEQHWYRPRGWLTALLAPLEGLFALLAAARRQAFRRGWKTSGRLPVPVVVIGNINVGGVGKTPLTLALLRDFAARGVKVGVISRGYGGKAPAPTEVGPDSDPALVGDEPLLLAAAGAPVVVGRDRVAAGRHLLARHPDVELILSDDGLQHYRLARDLEIVVLDGSRGLGSGRLLPNGPLREPPSRLAAVDAVVVNGEGAQLPLPDGLPRFAMTLRPGACHALDDASRARDAAGFAGRKVAALAGIGHPERFFDTLAGQGIAVEQRLSFPDHHAFVPGDIPADADAVIVTSKDAVKLARVIHDAAQRARLWVLPVQATLAPDLCEWILARLKTKHGR.

ATP is bound at residue 58-65; sequence NVGGVGKT.

Belongs to the LpxK family.

The catalysed reaction is a lipid A disaccharide + ATP = a lipid IVA + ADP + H(+). It participates in glycolipid biosynthesis; lipid IV(A) biosynthesis; lipid IV(A) from (3R)-3-hydroxytetradecanoyl-[acyl-carrier-protein] and UDP-N-acetyl-alpha-D-glucosamine: step 6/6. Transfers the gamma-phosphate of ATP to the 4'-position of a tetraacyldisaccharide 1-phosphate intermediate (termed DS-1-P) to form tetraacyldisaccharide 1,4'-bis-phosphate (lipid IVA). The sequence is that of Tetraacyldisaccharide 4'-kinase from Chromobacterium violaceum (strain ATCC 12472 / DSM 30191 / JCM 1249 / CCUG 213 / NBRC 12614 / NCIMB 9131 / NCTC 9757 / MK).